The following is a 577-amino-acid chain: Calcium-dependent protein kinase 22 (577 aa).

A lipid anchor (N-myristoyl glycine) is attached at glycine 2. Residues 105 to 368 (YRLGAELGRG…AKEVLEHPWL (264 aa)) enclose the Protein kinase domain. Residues 111–119 (LGRGEFGVT) and lysine 134 each bind ATP. The active-site Proton acceptor is the aspartate 234. An autoinhibitory domain region spans residues 374–404 (APNVSLGEIVRSRLMQFSAMNKFKKKALGVV). EF-hand domains are found at residues 411–446 (EEMD…NGHP), 447–482 (VPET…IKKM), 483–518 (SNEE…ELGP), and 520–553 (EQVV…GSDW). Ca(2+)-binding residues include aspartate 424, aspartate 426, serine 428, asparagine 430, aspartate 435, aspartate 460, aspartate 462, asparagine 464, threonine 466, glutamate 471, aspartate 496, aspartate 498, asparagine 500, glutamate 507, aspartate 531, aspartate 533, aspartate 535, arginine 537, and glutamate 542.

This sequence belongs to the protein kinase superfamily. Ser/Thr protein kinase family. CDPK subfamily.

It localises to the membrane. The enzyme catalyses L-seryl-[protein] + ATP = O-phospho-L-seryl-[protein] + ADP + H(+). It carries out the reaction L-threonyl-[protein] + ATP = O-phospho-L-threonyl-[protein] + ADP + H(+). With respect to regulation, activated by calcium. Autophosphorylation may play an important role in the regulation of the kinase activity. Functionally, may play a role in signal transduction pathways that involve calcium as a second messenger. The protein is Calcium-dependent protein kinase 22 of Oryza sativa subsp. japonica (Rice).